Consider the following 336-residue polypeptide: Calcium uniporter protein 3, mitochondrial (336 aa).

The transit peptide at 1 to 69 (MAMRKLLSKK…RFMHNSAMIR (69 aa)) directs the protein to the mitochondrion. Transmembrane regions (helical) follow at residues 231–251 (LWAGLGYLILQTAGFMRLTFW) and 257–277 (VMEPICFYVTSVYFMAGYAFF). The Selectivity filter signature appears at 255 to 263 (WDVMEPICF). Ca(2+) is bound at residue E259.

It belongs to the MCU (TC 1.A.77) family.

It localises to the mitochondrion inner membrane. It catalyses the reaction Ca(2+)(in) = Ca(2+)(out). Mitochondrial inner membrane calcium uniporter that mediates calcium uptake into mitochondria. Constitutes a pore-forming and calcium-conducting subunit. Mitochondrial calcium homeostasis plays key roles in cellular physiology and regulates cell bioenergetics, cytoplasmic calcium signals and activation of cell death pathways. The chain is Calcium uniporter protein 3, mitochondrial from Arabidopsis thaliana (Mouse-ear cress).